An 883-amino-acid chain; its full sequence is Phosphoenolpyruvate carboxylase (883 aa).

Catalysis depends on residues His138 and Lys546.

This sequence belongs to the PEPCase type 1 family. The cofactor is Mg(2+).

The catalysed reaction is oxaloacetate + phosphate = phosphoenolpyruvate + hydrogencarbonate. In terms of biological role, forms oxaloacetate, a four-carbon dicarboxylic acid source for the tricarboxylic acid cycle. The sequence is that of Phosphoenolpyruvate carboxylase from Salmonella gallinarum (strain 287/91 / NCTC 13346).